Consider the following 145-residue polypeptide: D-aminoacyl-tRNA deacylase (145 aa).

A Gly-cisPro motif, important for rejection of L-amino acids motif is present at residues 137-138 (GP).

Belongs to the DTD family. In terms of assembly, homodimer.

Its subcellular location is the cytoplasm. It carries out the reaction glycyl-tRNA(Ala) + H2O = tRNA(Ala) + glycine + H(+). The enzyme catalyses a D-aminoacyl-tRNA + H2O = a tRNA + a D-alpha-amino acid + H(+). Its function is as follows. An aminoacyl-tRNA editing enzyme that deacylates mischarged D-aminoacyl-tRNAs. Also deacylates mischarged glycyl-tRNA(Ala), protecting cells against glycine mischarging by AlaRS. Acts via tRNA-based rather than protein-based catalysis; rejects L-amino acids rather than detecting D-amino acids in the active site. By recycling D-aminoacyl-tRNA to D-amino acids and free tRNA molecules, this enzyme counteracts the toxicity associated with the formation of D-aminoacyl-tRNA entities in vivo and helps enforce protein L-homochirality. The protein is D-aminoacyl-tRNA deacylase of Pseudomonas fluorescens (strain SBW25).